A 269-amino-acid polypeptide reads, in one-letter code: Regulating synaptic membrane exocytosis protein 4 (269 aa).

The C2 domain maps to 115–233 (PMGGVEIGLQ…DLTTLAVGWY (119 aa)). 2 positions are modified to phosphoserine: Ser-254 and Ser-257.

Binds PPFIA3. As to expression, brain specific.

Its subcellular location is the synapse. Regulates synaptic membrane exocytosis. The chain is Regulating synaptic membrane exocytosis protein 4 (Rims4) from Rattus norvegicus (Rat).